A 416-amino-acid polypeptide reads, in one-letter code: DNA-guanine transglycosylase (416 aa).

The Proton acceptor role is filled by D95. The active-site Nucleophile is the D256. 4 residues coordinate Zn(2+): C368, C370, C373, and H395.

The protein belongs to the DNA-guanine transglycosylase family. Requires Zn(2+) as cofactor.

Its function is as follows. Part of the dpd cluster involved in the insertion of 7-deazaguanine derivatives in DNA. DpdA may insert 7-cyano-7-deazaguanine (preQ0) into DNA with the help of DpdB. DpdA and dpdB are necessary and sufficient to synthesize 2'-deoxy-7-cyano-7-deazaguanosine (dPreQ0). The protein is DNA-guanine transglycosylase of Salmonella montevideo.